We begin with the raw amino-acid sequence, 505 residues long: Trans-cinnamate 4-monooxygenase (505 aa).

The helical transmembrane segment at 3-23 (LILLEKSLLAVFFAVIFSIIV) threads the bilayer. Residues 213-218 (RSRLAQ) and A306 contribute to the (E)-cinnamate site. C447 is a heme binding site.

The protein belongs to the cytochrome P450 family. Requires heme as cofactor. As to expression, mostly expressed in stems, and, to a lower extent, in bulbs, roots, leaves and flowers.

It is found in the membrane. It carries out the reaction (E)-cinnamate + reduced [NADPH--hemoprotein reductase] + O2 = (E)-4-coumarate + oxidized [NADPH--hemoprotein reductase] + H2O + H(+). The protein operates within alkaloid biosynthesis. It participates in phenylpropanoid metabolism; trans-4-coumarate biosynthesis; trans-4-coumarate from trans-cinnamate: step 1/1. Its function is as follows. Catalyzes the first oxidative step of the phenylpropanoid pathway in higher plants by transforming trans-cinnamate into p-coumarate. The compounds formed by this pathway are essential components for lignification, pollination, and defense against ultraviolet light, predators and pathogens. Trans-4-coumarate is a precursor to all amaryllidaceae alkaloids such as galanthamine, lycorine and haemanthamine, and including haemanthamine- and crinamine-type alkaloids, promising anticancer agents. The protein is Trans-cinnamate 4-monooxygenase of Narcissus pseudonarcissus (Daffodil).